A 276-amino-acid chain; its full sequence is Large ribosomal subunit protein uL2 (276 aa).

The segment at 223–276 is disordered; sequence GVAMNPVDHPHGGGEGRGKGHHPTSPWGLPTKGYKTRRGKRPSDKFIVRRRNEV. Composition is skewed to basic and acidic residues over residues 230–240 and 263–276; these read DHPHGGGEGRG and RPSDKFIVRRRNEV.

Belongs to the universal ribosomal protein uL2 family. As to quaternary structure, part of the 50S ribosomal subunit. Forms a bridge to the 30S subunit in the 70S ribosome.

One of the primary rRNA binding proteins. Required for association of the 30S and 50S subunits to form the 70S ribosome, for tRNA binding and peptide bond formation. It has been suggested to have peptidyltransferase activity; this is somewhat controversial. Makes several contacts with the 16S rRNA in the 70S ribosome. The chain is Large ribosomal subunit protein uL2 from Thermotoga maritima (strain ATCC 43589 / DSM 3109 / JCM 10099 / NBRC 100826 / MSB8).